The chain runs to 205 residues: Glycerol-3-phosphate acyltransferase (205 aa).

6 helical membrane-spanning segments follow: residues L5–A25, G54–A74, I87–F107, V117–V137, C138–L158, and L162–W182.

It belongs to the PlsY family. Probably interacts with PlsX.

It is found in the cell inner membrane. It carries out the reaction an acyl phosphate + sn-glycerol 3-phosphate = a 1-acyl-sn-glycero-3-phosphate + phosphate. Its pathway is lipid metabolism; phospholipid metabolism. In terms of biological role, catalyzes the transfer of an acyl group from acyl-phosphate (acyl-PO(4)) to glycerol-3-phosphate (G3P) to form lysophosphatidic acid (LPA). This enzyme utilizes acyl-phosphate as fatty acyl donor, but not acyl-CoA or acyl-ACP. The polypeptide is Glycerol-3-phosphate acyltransferase (Gloeobacter violaceus (strain ATCC 29082 / PCC 7421)).